The chain runs to 598 residues: Eukaryotic translation initiation factor 3 subunit D (598 aa).

Positions 104 to 178 are disordered; that stretch reads VKTRGFGRGG…YDKPQRNRDS (75 aa). Gly residues predominate over residues 109 to 132; the sequence is FGRGGGTIFRGRGQRGGAQRGRGG. Residues 165 to 177 show a composition bias toward basic and acidic residues; the sequence is GWKDYDKPQRNRD. Positions 304–318 are RNA gate; it reads SIDLVTVNENAADAP. Positions 574–598 are disordered; the sequence is NTFEEEDDTGAKAEKDEESEEKDEE. Residues 589–598 are compositionally biased toward acidic residues; sequence DEESEEKDEE.

This sequence belongs to the eIF-3 subunit D family. Component of the eukaryotic translation initiation factor 3 (eIF-3) complex.

It localises to the cytoplasm. Functionally, mRNA cap-binding component of the eukaryotic translation initiation factor 3 (eIF-3) complex, which is involved in protein synthesis of a specialized repertoire of mRNAs and, together with other initiation factors, stimulates binding of mRNA and methionyl-tRNAi to the 40S ribosome. The eIF-3 complex specifically targets and initiates translation of a subset of mRNAs involved in cell proliferation. In the eIF-3 complex, eif3d specifically recognizes and binds the 7-methylguanosine cap of a subset of mRNAs. The protein is Eukaryotic translation initiation factor 3 subunit D of Coccidioides immitis (strain RS) (Valley fever fungus).